A 320-amino-acid chain; its full sequence is AA9 family lytic polysaccharide monooxygenase-like protein CEL1 (320 aa).

The first 29 residues, 1–29 (MRLPSRQQVLKMLATFSLALGLFAAKVQA), serve as a signal peptide directing secretion. 2 cysteine pairs are disulfide-bonded: Cys-78–Cys-199 and Cys-121–Cys-126. His-109 contacts Cu(2+). Asn-163 carries N-linked (GlcNAc...) asparagine glycosylation. 2 residues coordinate O2: His-189 and Gln-194. Cu(2+) is bound at residue Tyr-196. The interval 255 to 284 (GSGGNGGSPTTTPHTTTPITTSPPPTSTPG) is disordered. Residues 262 to 274 (SPTTTPHTTTPIT) are compositionally biased toward low complexity. Residues 284 to 320 (GTIPQYGQCGGIGWTGGTGCVAPYQCKVINDYYSQCL) form the CBM1 domain.

The protein belongs to the polysaccharide monooxygenase AA9 family. Requires Cu(2+) as cofactor.

The protein localises to the secreted. The catalysed reaction is [(1-&gt;4)-beta-D-glucosyl]n+m + reduced acceptor + O2 = 4-dehydro-beta-D-glucosyl-[(1-&gt;4)-beta-D-glucosyl]n-1 + [(1-&gt;4)-beta-D-glucosyl]m + acceptor + H2O.. Lytic polysaccharide monooxygenase (LPMO)-like protein that binds strongly to cellulose. Seems not to acts as an endoglucanase, a ceUobiohydrolase able to hydrolyze fluorogenic cellobiosides, a /3-glucosidase, a xylanase, nor a cellobiose:quinone oxidoreductase. The polypeptide is AA9 family lytic polysaccharide monooxygenase-like protein CEL1 (Agaricus bisporus (White button mushroom)).